The sequence spans 785 residues: MNKKILDVLEYDKIKQSIRQFIATENGTKELRELVPSSDETEVRNALKQTLDAVNIYRLKNGIPVPRLEDVTEALQRLKIDAALNGQELAQIGRILRATRTVINFFDDLENEEIEIIALDQVIEQLVTIPEVEERLSNSIEGNGHLLNSASSELRRIRASITRIESDVRSRMEKFTRGNNVKYLSEPIVTIRNERYVIPARVEYRSKFGGVVHDQSSSGQTLYVEPESVVDLNNELRQNQVAEVHEEQRILQELSALVAPYTDTLKDNSRILGHLDLLNAKAQYAHQLKATEPQISASNEINLREARHPLIDQKKVVSNDIRLGGEYETLVITGPNTGGKTITLKTVGLLQLMAQSGMFIPANENSTVRIFEEIFADIGDEQSIEQNLSTFSSHMDNTIRILGNLNERSLALFDELGAGTDPKEGAALAIAILDKVRSTGAVSMTTTHYPELKTYGYERMGTINASMEFDVDTLQPTYKLLLGIPGQSNAFEISKRLGLDSDIISQARGLVDQDSQDLNNMIKDLTTRQKRAQKINQQAVELLKQAEEYHQTLVKGVDSLNSQRSNLIESAKEDANRIVNDSQAEADRIIKRLRKLEHSTGSFKENDLIDAKSKINALHQDTNLKRNKVLRRAKEAQKFHENDEVVVLTYGQRGELLRQVDKKHWEVQMGIMKMKVAVDELEKVKPDKTVKRRVHNSVQRTASAGVKTTLDLRGKRYEEALTETDRYIDAALLAGYDEVTIVHGKGTGALRSGITKYLKNNRRIKAFEYAPANAGGNGATIVHFK.

Position 334-341 (334-341 (GPNTGGKT)) interacts with ATP. Positions 710–785 (LDLRGKRYEE…GNGATIVHFK (76 aa)) constitute a Smr domain.

This sequence belongs to the DNA mismatch repair MutS family. MutS2 subfamily. In terms of assembly, homodimer. Binds to stalled ribosomes, contacting rRNA.

Its function is as follows. Endonuclease that is involved in the suppression of homologous recombination and thus may have a key role in the control of bacterial genetic diversity. Acts as a ribosome collision sensor, splitting the ribosome into its 2 subunits. Detects stalled/collided 70S ribosomes which it binds and splits by an ATP-hydrolysis driven conformational change. Acts upstream of the ribosome quality control system (RQC), a ribosome-associated complex that mediates the extraction of incompletely synthesized nascent chains from stalled ribosomes and their subsequent degradation. Probably generates substrates for RQC. This chain is Endonuclease MutS2, found in Pediococcus pentosaceus (strain ATCC 25745 / CCUG 21536 / LMG 10740 / 183-1w).